Consider the following 422-residue polypeptide: Dihydroorotase (422 aa).

Positions 59 and 61 each coordinate Zn(2+). Substrate contacts are provided by residues 61–63 (HFR) and N93. The Zn(2+) site is built by D150, H177, and H230. N276 serves as a coordination point for substrate. D303 is a binding site for Zn(2+). Residue D303 is part of the active site. H307 is a substrate binding site.

Belongs to the metallo-dependent hydrolases superfamily. DHOase family. Class I DHOase subfamily. The cofactor is Zn(2+).

It catalyses the reaction (S)-dihydroorotate + H2O = N-carbamoyl-L-aspartate + H(+). Its pathway is pyrimidine metabolism; UMP biosynthesis via de novo pathway; (S)-dihydroorotate from bicarbonate: step 3/3. Its function is as follows. Catalyzes the reversible cyclization of carbamoyl aspartate to dihydroorotate. The protein is Dihydroorotase of Streptococcus pyogenes serotype M3 (strain ATCC BAA-595 / MGAS315).